A 148-amino-acid chain; its full sequence is NADPH-dependent 7-cyano-7-deazaguanine reductase (148 aa).

C50 (thioimide intermediate) is an active-site residue. Catalysis depends on D57, which acts as the Proton donor. Residues 72–74 (VES) and 91–92 (HE) each bind substrate.

It belongs to the GTP cyclohydrolase I family. QueF type 1 subfamily.

The protein localises to the cytoplasm. It carries out the reaction 7-aminomethyl-7-carbaguanine + 2 NADP(+) = 7-cyano-7-deazaguanine + 2 NADPH + 3 H(+). It participates in tRNA modification; tRNA-queuosine biosynthesis. Catalyzes the NADPH-dependent reduction of 7-cyano-7-deazaguanine (preQ0) to 7-aminomethyl-7-deazaguanine (preQ1). The polypeptide is NADPH-dependent 7-cyano-7-deazaguanine reductase (Helicobacter pylori (strain ATCC 700392 / 26695) (Campylobacter pylori)).